A 466-amino-acid chain; its full sequence is MRLHDTLHAAKRVFSPKNSERVGVYVCGPTVYDLAHIGNARSVVVYDVLFRLLKALYPEVIYVRNITDVDDKIINATESENKSIAELTAHYTKLFHEDIEALNCLSPTFEPRATEEIETMLHIIGRLIQAGHAYVRGGTVYFSVESYKHYGALSGRKLGDMISGSRVEVVAEKLHPGDFVLWKPATDLDMKLGACWPSPWGVGRPGWHVECSAMSYRYLGDSFDIHGGGADLMFPHHENEISQSCCAFPGSEYARYWVHNGFLTVNGGEKMSKSLGNVITVRGLLSNGVDGEVIRYVFLSTHYRKPLDWGDKAVLDAKEALNKIYRSCEGFSAQLLSTGLEDVGVHDAVMASLRDDMNTPAAIAALHELVKEINKTNNAGEKLRLARVLNKSAMLMGMFRNFPERKLLDMRGLVDEGEINRLIEKRVEAKKCGDFKLADEIRESLSNMGIGISDGKDGSTRWHRKN.

A Zn(2+)-binding site is contributed by Cys-27. The 'HIGH' region motif lies at 29-39 (PTVYDLAHIGN). Residues Cys-211, His-236, and Glu-240 each contribute to the Zn(2+) site. A 'KMSKS' region motif is present at residues 270–274 (KMSKS). Lys-273 is a binding site for ATP.

Belongs to the class-I aminoacyl-tRNA synthetase family. Monomer. Requires Zn(2+) as cofactor.

It is found in the cytoplasm. It carries out the reaction tRNA(Cys) + L-cysteine + ATP = L-cysteinyl-tRNA(Cys) + AMP + diphosphate. This Anaplasma marginale (strain St. Maries) protein is Cysteine--tRNA ligase.